The primary structure comprises 175 residues: Ribosome maturation factor RimM (175 aa).

Positions 98–175 constitute a PRC barrel domain; that stretch reads EGEYYWYQLE…EMRVDWDADF (78 aa).

The protein belongs to the RimM family. Binds ribosomal protein uS19.

The protein resides in the cytoplasm. Functionally, an accessory protein needed during the final step in the assembly of 30S ribosomal subunit, possibly for assembly of the head region. Essential for efficient processing of 16S rRNA. May be needed both before and after RbfA during the maturation of 16S rRNA. It has affinity for free ribosomal 30S subunits but not for 70S ribosomes. The sequence is that of Ribosome maturation factor RimM from Pseudomonas paraeruginosa (strain DSM 24068 / PA7) (Pseudomonas aeruginosa (strain PA7)).